Consider the following 292-residue polypeptide: MADDAGAAGGPGGPGGPGMGGRGGFRGGFGSGIRGRGRGRGRGRGRGRGARGGKAEDKEWLPVTKLGRLVKDMKIKSLEEIYLFSLPIKESEIIDFCLGAALKDEVLKIMPVQKQTRAGQRTRFKAFVAIGDYNGHVGLGLKCSKEVATAIRGAIILAKLSIVPVRRGYWGNKIGKPHTVLCKVTGRCGSLVRLIPAPRGTGIVSAPVPKKLLLMAGIDDCYTSARGCTATLGNFAKATFDAISKTYSYLTPDLWKETVFTKSPYQEFTNHLMKTHTRVSVQRTQAPAVATT.

Residues methionine 1–glutamate 56 are disordered. An N-acetylalanine modification is found at alanine 2. Positions alanine 7–arginine 34 are enriched in gly residues. The span at glycine 35–arginine 51 shows a compositional bias: basic residues. Residues lysine 54 and lysine 58 each participate in a glycyl lysine isopeptide (Lys-Gly) (interchain with G-Cter in ubiquitin) cross-link. One can recognise an S5 DRBM domain in the interval leucine 102–valine 165. The residue at position 251 (threonine 251) is a Phosphothreonine. Lysine 262 is subject to N6-acetyllysine. Serine 263 carries the post-translational modification Phosphoserine. Position 269 is a phosphothreonine (threonine 269). Residue lysine 274 is modified to N6-acetyllysine; alternate. Lysine 274 participates in a covalent cross-link: Glycyl lysine isopeptide (Lys-Gly) (interchain with G-Cter in SUMO1); alternate. A Glycyl lysine isopeptide (Lys-Gly) (interchain with G-Cter in SUMO2); alternate cross-link involves residue lysine 274. Lysine 274 is covalently cross-linked (Glycyl lysine isopeptide (Lys-Gly) (interchain with G-Cter in ubiquitin); alternate). Serine 280 is subject to Phosphoserine.

This sequence belongs to the universal ribosomal protein uS5 family. Component of the small ribosomal subunit. Interacts with zinc finger protein ZNF277 (via zinc-finger domains); the interaction is direct; the interaction is extra-ribosomal. Interaction with ZNF277 competes with the binding of RPS2 to protein arginine methyltransferase PRMT3. In terms of processing, citrullinated by PADI4 in the Arg/Gly-rich region. Asymmetric arginine dimethylation by PRMT3 occurs at multiple sites in the Arg/Gly-rich region. Post-translationally, monoubiquitinated at Lys-54 and Lys-58 by RNF10 when a ribosome has stalled during translation, leading to its degradation by the proteasome. Deubiquitinated at Lys-54 and Lys-58 by USP10, preventing degradation by the proteasome and promoting 40S ribosome subunit recycling following ribosome dissociation.

It localises to the cytoplasm. The protein resides in the nucleus. Its subcellular location is the nucleolus. In terms of biological role, component of the ribosome, a large ribonucleoprotein complex responsible for the synthesis of proteins in the cell. The small ribosomal subunit (SSU) binds messenger RNAs (mRNAs) and translates the encoded message by selecting cognate aminoacyl-transfer RNA (tRNA) molecules. The large subunit (LSU) contains the ribosomal catalytic site termed the peptidyl transferase center (PTC), which catalyzes the formation of peptide bonds, thereby polymerizing the amino acids delivered by tRNAs into a polypeptide chain. The nascent polypeptides leave the ribosome through a tunnel in the LSU and interact with protein factors that function in enzymatic processing, targeting, and the membrane insertion of nascent chains at the exit of the ribosomal tunnel. Plays a role in the assembly and function of the 40S ribosomal subunit. In Oryctolagus cuniculus (Rabbit), this protein is Small ribosomal subunit protein uS5 (RPS2).